The primary structure comprises 397 residues: Serpin B10 (397 aa).

Residues 74–77 carry the Nuclear localization signal motif; the sequence is KKRK.

The protein belongs to the serpin family. Ov-serpin subfamily.

It localises to the nucleus. It is found in the cytoplasm. In terms of biological role, protease inhibitor that may play a role in the regulation of protease activities during hematopoiesis and apoptosis induced by TNF. May regulate protease activities in the cytoplasm and in the nucleus. The polypeptide is Serpin B10 (SERPINB10) (Sorex araneus (Eurasian common shrew)).